The following is a 772-amino-acid chain: MSKDQSYVLKAWEVTVRKTQQAKKRANSVFGTVSVAPHTDNDTTTDDNDDETTTNRSSLEEFYHAERVLPNGDYYTGQWYDSFPHGHGKYLWTDGCMYIGDWYNGKTMGNGKFGWPSGATYEGEFKSGYMDGIGTYTGPSGDAYKGQWVMNLKHGHGVKSFANGDAYDGEWRRGLQEGQGKYQWSDGSYYIGEWKNGTICGKGSFVWTNGNRYDGFWDEGFPRGNGTFKWDNGSFYVGHWSKDPEEMNGTYYPSGNEGNLEWDPKDLFNNLSEYTICSGERVPTLPSQKKLSVWNSSKRIEKPRRTSVDGRVSVGVDRAFEKMNMWGNEIGEGGADMRKELDAELMRLDAEGLQSLKSSPVPMKLPKAGRKQGETISKGHRNYELMLNLQLGIRHSVGRQAPAASLDLKPSAFDPKDKIWRRFPREGTKYTPPHQSTEFKWKDYCPLVFRSLRKLFKVDPADYMLSICGNDALRELSSPGKSGSFFYLTNDDRYMIKTMKKSETKVLLGMLAAYYNHVRAFENSLVIRFFGLHCVKLNGPTQKKVRFVIMGNLFCSKYSVHRRFDLKGSSLGRTTDKPESEIDSNTILKDLDLNFIFRLQKAWYQEFIRQIDKDCEFLEQERIMDYSLLVGIHFREASVAGELIPSGARTPIGESEEESGPRLSRAEVDELLSDPSRWASIRLGTNMPARAERTMRKNDSELQLVGEPTGEFYEVVMIFGIIDILQDYDISKKLEHAYKSIQYDPSSISAVDPRQYSRRFRDFIFKVFTDDN.

Residues alanine 22–arginine 56 form a disordered region. The span at threonine 43 to threonine 52 shows a compositional bias: acidic residues. MORN repeat units lie at residues tyrosine 75–methionine 97, tyrosine 98–threonine 120, tyrosine 121–alanine 143, tyrosine 144–alanine 166, tyrosine 167–tyrosine 189, tyrosine 190–arginine 212, tyrosine 213–phenylalanine 235, and tyrosine 236–glutamate 257. The 392-residue stretch at serine 377–phenylalanine 768 folds into the PIPK domain. The interval serine 646 to arginine 665 is disordered. The segment at tyrosine 728 to serine 749 is activation loop.

It catalyses the reaction a 1,2-diacyl-sn-glycero-3-phospho-(1D-myo-inositol 4-phosphate) + ATP = a 1,2-diacyl-sn-glycero-3-phospho-(1D-myo-inositol-4,5-bisphosphate) + ADP + H(+). This is Phosphatidylinositol 4-phosphate 5-kinase 5 (PIP5K5) from Arabidopsis thaliana (Mouse-ear cress).